Consider the following 263-residue polypeptide: Probable ABC transporter permease protein ycf63 (263 aa).

Transmembrane regions (helical) follow at residues 43–63 (IVGP…SMVF), 70–89 (EFLY…IAFT), 150–170 (ILSI…AFVM), 188–208 (ISDF…IGFI), and 230–250 (SVVT…YFMF).

It belongs to the MlaE permease family.

The protein localises to the plastid. The protein resides in the chloroplast membrane. In terms of biological role, could be part of an ABC transporter complex. The sequence is that of Probable ABC transporter permease protein ycf63 (ycf63) from Pyropia yezoensis (Susabi-nori).